Reading from the N-terminus, the 689-residue chain is Beta-adrenergic receptor kinase 1 (689 aa).

The tract at residues 1–190 (MADLEAVLAD…ELNIHLTMND (190 aa)) is N-terminal. An RGS domain is found at 54 to 175 (TFEKIFSQKL…IESDKFTRFC (122 aa)). The 263-residue stretch at 191–453 (FSVHRIIGRG…AQEVKESPFF (263 aa)) folds into the Protein kinase domain. ATP contacts are provided by residues 197 to 205 (IGRGGFGEV) and K220. D317 acts as the Proton acceptor in catalysis. The 68-residue stretch at 454–521 (RSLDWQMVFL…TISERWQQEV (68 aa)) folds into the AGC-kinase C-terminal domain. A PH domain is found at 558–652 (DCIVHGYMSK…WKKELRDAYR (95 aa)). Residue S670 is modified to Phosphoserine.

Belongs to the protein kinase superfamily. AGC Ser/Thr protein kinase family. GPRK subfamily. Interacts with the heterodimer formed by GNB1 and GNG2. Interacts with GIT1. Interacts with, and phosphorylates chemokine-stimulated CCR5. Interacts with ARRB1. Interacts with LPAR1 and LPAR2. Interacts with RALA in response to LPAR1 activation. ADRBK1 and RALA mutually inhibit each other's binding to LPAR1. Interacts with ADRB2.

Its subcellular location is the cytoplasm. It localises to the cell membrane. It is found in the postsynapse. The protein resides in the presynapse. The catalysed reaction is [beta-adrenergic receptor] + ATP = [beta-adrenergic receptor]-phosphate + ADP + H(+). Its activity is regulated as follows. In contrast to other AGC family kinases, the catalytic activity is solely regulated by the binding of substrates and ligands, not by phosphorylation of the kinase domain. Functionally, specifically phosphorylates the agonist-occupied form of the beta-adrenergic and closely related receptors, probably inducing a desensitization of them. Key regulator of LPAR1 signaling. Competes with RALA for binding to LPAR1 thus affecting the signaling properties of the receptor. Desensitizes LPAR1 and LPAR2 in a phosphorylation-independent manner. Positively regulates ciliary smoothened (SMO)-dependent Hedgehog (Hh) signaling pathway by facilitating the trafficking of SMO into the cilium and the stimulation of SMO activity. Inhibits relaxation of airway smooth muscle in response to blue light. This chain is Beta-adrenergic receptor kinase 1, found in Mus musculus (Mouse).